An 879-amino-acid chain; its full sequence is Leucine--tRNA ligase (879 aa).

The short motif at 45–55 (PYPSGALHMGH) is the 'HIGH' region element. The short motif at 637-641 (KMSKS) is the 'KMSKS' region element. Lys-640 lines the ATP pocket.

The protein belongs to the class-I aminoacyl-tRNA synthetase family.

It is found in the cytoplasm. The enzyme catalyses tRNA(Leu) + L-leucine + ATP = L-leucyl-tRNA(Leu) + AMP + diphosphate. In Xylella fastidiosa (strain M23), this protein is Leucine--tRNA ligase.